Consider the following 151-residue polypeptide: UPAR/Ly6 domain-containing protein crok (151 aa).

The first 23 residues, 1 to 23 (MKTLEKYILFAIVLCCLLQLGQA), serve as a signal peptide directing secretion. Residues 24 to 128 (IKCWDCRSDN…KDGCNSAGIH (105 aa)) lie on the Lumenal side of the membrane. 5 disulfide bridges follow: C26–C68, C29–C37, C51–C85, C100–C114, and C116–C122. N-linked (GlcNAc...) asparagine glycosylation is present at N43. A lipid anchor (GPI-anchor amidated serine) is attached at S124. Positions 125 to 151 (AGIHRLGLMGVLTGTLLSVIVAHLLRQ) are cleaved as a propeptide — removed in mature form. The helical transmembrane segment at 129–149 (RLGLMGVLTGTLLSVIVAHLL) threads the bilayer. Over 150–151 (RQ) the chain is Cytoplasmic.

It belongs to the quiver family.

It localises to the vesicle. The protein localises to the membrane. It is found in the endomembrane system. Functionally, required for septate junction assembly, possibly by organizing the preassembly and transport of septate junction proteins including dlg1/disks large 1 and Nrx-IV/Neurexin-IV. Involved in paracellular barrier functions of trachea, hindgut and salivary gland mediated by epithelial cell septate junctions. The sequence is that of UPAR/Ly6 domain-containing protein crok from Drosophila melanogaster (Fruit fly).